A 65-amino-acid chain; its full sequence is Large ribosomal subunit protein uL29 (65 aa).

The protein belongs to the universal ribosomal protein uL29 family.

This is Large ribosomal subunit protein uL29 from Mycoplasmopsis synoviae (strain 53) (Mycoplasma synoviae).